The primary structure comprises 188 residues: Mitochondrial import inner membrane translocase subunit TIM23-2 (188 aa).

Helical transmembrane passes span 64 to 84, 112 to 131, 138 to 154, and 161 to 178; these read TGTAYLGGSVAGASVGVITGV, GNRIGIIGLVYAGIESGIVA, VWTSVVAGLGTGAVCRA, and AAVAGALGGLAAGAVVAG.

The protein belongs to the Tim17/Tim22/Tim23 family. Homomultimer. Component of the TIM17:23 complex at least composed of TIM23, TIM17 and TIM50. The complex interacts with the TIM44 component of the PAM complex. Also part of the NADH-ubiquinone oxidoreductase complex I. Interacts with OEP163, TIM17-2, TIM21, TIM50 and MPPA2. In terms of tissue distribution, expressed in roots and young cotyledons. Detected in leaves and flowers.

The protein localises to the mitochondrion inner membrane. Its function is as follows. Essential component of the TIM17:23 complex, a complex that mediates the translocation of transit peptide-containing proteins across the mitochondrial inner membrane. Links the inner and outer membranes. The protein is Mitochondrial import inner membrane translocase subunit TIM23-2 (TIM23-2) of Arabidopsis thaliana (Mouse-ear cress).